The sequence spans 204 residues: Late expression factor 2 (204 aa).

Belongs to the baculoviridae LEF-2 family.

In terms of biological role, required for late and very late gene expression. Specifically required for expression from the vp39 and polh promoters. The protein is Late expression factor 2 (LEF-2) of Orgyia pseudotsugata (Douglas-fir tussock moth).